A 233-amino-acid polypeptide reads, in one-letter code: Small ribosomal subunit protein uS2 (233 aa).

Belongs to the universal ribosomal protein uS2 family.

This Bacillus mycoides (strain KBAB4) (Bacillus weihenstephanensis) protein is Small ribosomal subunit protein uS2.